The following is a 238-amino-acid chain: Uridylate kinase (238 aa).

Residue 12-15 (KLSG) participates in ATP binding. G54 contributes to the UMP binding site. ATP contacts are provided by G55 and R59. Residues D74 and 135–142 (TGNPFFTT) each bind UMP. Residues T162, N163, Y168, and D171 each contribute to the ATP site.

Belongs to the UMP kinase family. As to quaternary structure, homohexamer.

The protein localises to the cytoplasm. The enzyme catalyses UMP + ATP = UDP + ADP. The protein operates within pyrimidine metabolism; CTP biosynthesis via de novo pathway; UDP from UMP (UMPK route): step 1/1. Its activity is regulated as follows. Inhibited by UTP. In terms of biological role, catalyzes the reversible phosphorylation of UMP to UDP. This chain is Uridylate kinase, found in Rhodopseudomonas palustris (strain BisB18).